A 20-amino-acid polypeptide reads, in one-letter code: Astacin-like peptidase p18 (20 aa).

One can recognise a Peptidase M12A domain in the interval asparagine 1–aspartate 20.

It depends on Zn(2+) as a cofactor.

Functionally, active against casein. Has a role as a digestive enzyme. In Argiope aurantia (Black-and-yellow garden spider), this protein is Astacin-like peptidase p18.